A 611-amino-acid chain; its full sequence is Chaperone protein DnaK (611 aa).

A Phosphothreonine; by autocatalysis modification is found at threonine 173. The segment covering 579-592 has biased composition (low complexity); sequence AAGQAEGAQGAQDA. Positions 579–598 are disordered; that stretch reads AAGQAEGAQGAQDAGAKKDN.

This sequence belongs to the heat shock protein 70 family.

Its function is as follows. Acts as a chaperone. The chain is Chaperone protein DnaK from Bacillus cereus (strain AH187).